The chain runs to 80 residues: ATP synthase subunit c (80 aa).

Helical transmembrane passes span 11-31 and 53-73; these read MAAA…IGIL and FFVV…LGLY.

The protein belongs to the ATPase C chain family. F-type ATPases have 2 components, F(1) - the catalytic core - and F(0) - the membrane proton channel. F(1) has five subunits: alpha(3), beta(3), gamma(1), delta(1), epsilon(1). F(0) has three main subunits: a(1), b(2) and c(10-14). The alpha and beta chains form an alternating ring which encloses part of the gamma chain. F(1) is attached to F(0) by a central stalk formed by the gamma and epsilon chains, while a peripheral stalk is formed by the delta and b chains.

The protein localises to the cell inner membrane. Functionally, f(1)F(0) ATP synthase produces ATP from ADP in the presence of a proton or sodium gradient. F-type ATPases consist of two structural domains, F(1) containing the extramembraneous catalytic core and F(0) containing the membrane proton channel, linked together by a central stalk and a peripheral stalk. During catalysis, ATP synthesis in the catalytic domain of F(1) is coupled via a rotary mechanism of the central stalk subunits to proton translocation. Key component of the F(0) channel; it plays a direct role in translocation across the membrane. A homomeric c-ring of between 10-14 subunits forms the central stalk rotor element with the F(1) delta and epsilon subunits. The chain is ATP synthase subunit c from Erwinia tasmaniensis (strain DSM 17950 / CFBP 7177 / CIP 109463 / NCPPB 4357 / Et1/99).